The following is a 76-amino-acid chain: Esculentin-2MT1 (76 aa).

A signal peptide spans 1–22 (MFTMKKPLLLLFFLGTISLSLC). The propeptide occupies 23 to 37 (EEERNADEDDGEKEV). Cys-70 and Cys-76 are oxidised to a cystine.

This sequence belongs to the frog skin active peptide (FSAP) family. Esculentin subfamily. As to expression, expressed by the skin glands.

The protein localises to the secreted. Functionally, antimicrobial peptide. The protein is Esculentin-2MT1 of Amolops mantzorum (Sichuan torrent frog).